The sequence spans 128 residues: uncharacterized protein (128 aa).

This is an uncharacterized protein from Vaccinia virus (strain Copenhagen) (VACV).